The sequence spans 585 residues: Regulator of gene activity (585 aa).

The span at 42–56 (FQTDFANSYPGTANY) shows a compositional bias: polar residues. Disordered regions lie at residues 42-93 (FQTD…GNRN), 148-191 (GGGG…PGSK), and 349-394 (GVGG…KVTN). Residues 58–71 (QAPQQQQQQQQQPQ) show a composition bias toward low complexity. The span at 166–184 (PSLTNARGQNDQTLPQSNP) shows a compositional bias: polar residues. The segment covering 349-367 (GVGGGLGSGSGSSGSGAGG) has biased composition (gly residues). Over residues 372-388 (DNSSNDKLVKSGVQTSP) the composition is skewed to polar residues.

Belongs to the CNOT2/3/5 family. Component of the CCR4-NOT complex composed of at least Pop2/Caf1-55, Ccr4, Not1, Rga/Not2, and Not3. As to expression, expressed in heterogeneous levels between adjacent germline stem cells (at protein level).

The protein localises to the cytoplasm. Functionally, component of the CCR4-NOT complex which is one of the major cellular mRNA deadenylases and is linked to various cellular processes including bulk mRNA degradation, miRNA-mediated repression, translational repression during translational initiation and general transcription regulation. Additional complex functions may be a consequence of its influence on mRNA expression. Essential for viability. Acts as a suppressor of position effect variegation (PEV) at the white locus and regulates the expression of several unrelated genes. Plays a role in germline stem cell differentiation in the ovaries. This is Regulator of gene activity from Drosophila melanogaster (Fruit fly).